We begin with the raw amino-acid sequence, 193 residues long: Holliday junction branch migration complex subunit RuvA (193 aa).

Residues 1 to 64 (MIGRIAGTLL…EDAHLLFGFA (64 aa)) are domain I. The interval 65–144 (TATERNTFRE…DLGHAPGATP (80 aa)) is domain II. The tract at residues 145-151 (LADSAVD) is flexible linker. The interval 151 to 193 (DILNALLALGYSEKEAAQAIKQVPAGTGVSDGIKLALKALSKG) is domain III.

Belongs to the RuvA family. In terms of assembly, homotetramer. Forms an RuvA(8)-RuvB(12)-Holliday junction (HJ) complex. HJ DNA is sandwiched between 2 RuvA tetramers; dsDNA enters through RuvA and exits via RuvB. An RuvB hexamer assembles on each DNA strand where it exits the tetramer. Each RuvB hexamer is contacted by two RuvA subunits (via domain III) on 2 adjacent RuvB subunits; this complex drives branch migration. In the full resolvosome a probable DNA-RuvA(4)-RuvB(12)-RuvC(2) complex forms which resolves the HJ.

The protein localises to the cytoplasm. Its function is as follows. The RuvA-RuvB-RuvC complex processes Holliday junction (HJ) DNA during genetic recombination and DNA repair, while the RuvA-RuvB complex plays an important role in the rescue of blocked DNA replication forks via replication fork reversal (RFR). RuvA specifically binds to HJ cruciform DNA, conferring on it an open structure. The RuvB hexamer acts as an ATP-dependent pump, pulling dsDNA into and through the RuvAB complex. HJ branch migration allows RuvC to scan DNA until it finds its consensus sequence, where it cleaves and resolves the cruciform DNA. The sequence is that of Holliday junction branch migration complex subunit RuvA from Cupriavidus metallidurans (strain ATCC 43123 / DSM 2839 / NBRC 102507 / CH34) (Ralstonia metallidurans).